The chain runs to 211 residues: Protein-methionine-sulfoxide reductase heme-binding subunit MsrQ (211 aa).

Helical transmembrane passes span 17 to 37 (LAGL…GLGA), 82 to 102 (LWCF…ELGV), 116 to 136 (PYLT…FTST), and 153 to 173 (FVYL…KIIS).

Belongs to the MsrQ family. As to quaternary structure, heterodimer of a catalytic subunit (MsrP) and a heme-binding subunit (MsrQ). Requires FMN as cofactor. Heme b serves as cofactor.

The protein localises to the cell inner membrane. Its function is as follows. Part of the MsrPQ system that repairs oxidized periplasmic proteins containing methionine sulfoxide residues (Met-O), using respiratory chain electrons. Thus protects these proteins from oxidative-stress damage caused by reactive species of oxygen and chlorine generated by the host defense mechanisms. MsrPQ is essential for the maintenance of envelope integrity under bleach stress, rescuing a wide series of structurally unrelated periplasmic proteins from methionine oxidation, including the primary periplasmic chaperone SurA and the lipoprotein Pal. MsrQ provides electrons for reduction to the reductase catalytic subunit MsrP, using the quinone pool of the respiratory chain. The polypeptide is Protein-methionine-sulfoxide reductase heme-binding subunit MsrQ (Shigella boydii serotype 18 (strain CDC 3083-94 / BS512)).